Reading from the N-terminus, the 642-residue chain is Rhotekin-2 (642 aa).

The REM-1 domain maps to 30–105 (IKRKKIRESM…AQKRTGHQDF (76 aa)). One can recognise a PH domain in the interval 306-413 (LDMMSGFLSQ…WLDSLWQHIY (108 aa)). Disordered stretches follow at residues 505-563 (TVLS…GRPS) and 575-642 (LQKS…PKAW). 2 stretches are compositionally biased toward basic and acidic residues: residues 597–615 (PEKR…KEYI) and 632–642 (SFREKMNPKAW).

The protein is Rhotekin-2 (rtkn2) of Danio rerio (Zebrafish).